Consider the following 495-residue polypeptide: UDP-N-acetylmuramoyl-L-alanyl-D-glutamate--2,6-diaminopimelate ligase (495 aa).

UDP-N-acetyl-alpha-D-muramoyl-L-alanyl-D-glutamate-binding positions include Leu27, Ser29, and 44-46; that span reads HQA. 116-122 is a binding site for ATP; that stretch reads GTNGKTT. Residues Asn157, 158-159, Ser185, Gln191, and Arg193 each bind UDP-N-acetyl-alpha-D-muramoyl-L-alanyl-D-glutamate; that span reads TT. Position 225 is an N6-carboxylysine (Lys225). Residues Arg390, 414 to 417, Gly465, and Glu469 each bind meso-2,6-diaminopimelate; that span reads DNPR. Positions 414–417 match the Meso-diaminopimelate recognition motif motif; sequence DNPR.

This sequence belongs to the MurCDEF family. MurE subfamily. It depends on Mg(2+) as a cofactor. In terms of processing, carboxylation is probably crucial for Mg(2+) binding and, consequently, for the gamma-phosphate positioning of ATP.

Its subcellular location is the cytoplasm. The enzyme catalyses UDP-N-acetyl-alpha-D-muramoyl-L-alanyl-D-glutamate + meso-2,6-diaminopimelate + ATP = UDP-N-acetyl-alpha-D-muramoyl-L-alanyl-gamma-D-glutamyl-meso-2,6-diaminopimelate + ADP + phosphate + H(+). It participates in cell wall biogenesis; peptidoglycan biosynthesis. Catalyzes the addition of meso-diaminopimelic acid to the nucleotide precursor UDP-N-acetylmuramoyl-L-alanyl-D-glutamate (UMAG) in the biosynthesis of bacterial cell-wall peptidoglycan. This is UDP-N-acetylmuramoyl-L-alanyl-D-glutamate--2,6-diaminopimelate ligase from Salmonella paratyphi A (strain ATCC 9150 / SARB42).